Reading from the N-terminus, the 565-residue chain is Sialate:O-sulfotransferase 2 (565 aa).

Residues 1–18 lie on the Cytoplasmic side of the membrane; it reads MAKLWFKFQRYFRRKPVR. Residues 19–41 traverse the membrane as a helical; Signal-anchor for type II membrane protein segment; sequence FFTFLALYLTAGSLVFLHSGFVG. Topologically, residues 42–565 are extracellular; the sequence is QPAVSGNQAN…TGVPDDYYPR (524 aa). WSC domains lie at 127 to 219 and 230 to 324; these read RAKY…YRLQ and SAVF…YQTQ. N-linked (GlcNAc...) asparagine glycosylation is found at asparagine 189 and asparagine 242.

It belongs to the WSCD family.

The protein localises to the golgi apparatus membrane. Sialate:O-sulfotransferase which catalyzes 8-O-sulfation at the Sia-glycan level using 3'-phosphoadenosine 5'-phosphosulfate (PAPS) as a donor, forming 8-O-sulfated Sia (Sia8S)-glycans. Displays selectivity toward glycoproteins such as TF/transferrin. The polypeptide is Sialate:O-sulfotransferase 2 (WSCD2) (Homo sapiens (Human)).